The chain runs to 183 residues: ATP synthase subunit b, chloroplastic (183 aa).

The helical transmembrane segment at Asp-25–Gly-45 threads the bilayer.

Belongs to the ATPase B chain family. As to quaternary structure, F-type ATPases have 2 components, F(1) - the catalytic core - and F(0) - the membrane proton channel. F(1) has five subunits: alpha(3), beta(3), gamma(1), delta(1), epsilon(1). F(0) has four main subunits: a(1), b(1), b'(1) and c(10-14). The alpha and beta chains form an alternating ring which encloses part of the gamma chain. F(1) is attached to F(0) by a central stalk formed by the gamma and epsilon chains, while a peripheral stalk is formed by the delta, b and b' chains.

Its subcellular location is the plastid. The protein resides in the chloroplast thylakoid membrane. Functionally, f(1)F(0) ATP synthase produces ATP from ADP in the presence of a proton or sodium gradient. F-type ATPases consist of two structural domains, F(1) containing the extramembraneous catalytic core and F(0) containing the membrane proton channel, linked together by a central stalk and a peripheral stalk. During catalysis, ATP synthesis in the catalytic domain of F(1) is coupled via a rotary mechanism of the central stalk subunits to proton translocation. In terms of biological role, component of the F(0) channel, it forms part of the peripheral stalk, linking F(1) to F(0). The sequence is that of ATP synthase subunit b, chloroplastic from Sorghum bicolor (Sorghum).